A 233-amino-acid chain; its full sequence is Enolase-phosphatase E1 (233 aa).

Residues Asp-16 and Glu-18 each contribute to the Mg(2+) site. Substrate is bound by residues 131-132 and Lys-167; that span reads SS. Asp-193 contacts Mg(2+).

It belongs to the HAD-like hydrolase superfamily. MasA/MtnC family. In terms of assembly, monomer. It depends on Mg(2+) as a cofactor.

The protein resides in the cytoplasm. Its subcellular location is the nucleus. The catalysed reaction is 5-methylsulfanyl-2,3-dioxopentyl phosphate + H2O = 1,2-dihydroxy-5-(methylsulfanyl)pent-1-en-3-one + phosphate. The protein operates within amino-acid biosynthesis; L-methionine biosynthesis via salvage pathway; L-methionine from S-methyl-5-thio-alpha-D-ribose 1-phosphate: step 3/6. It functions in the pathway amino-acid biosynthesis; L-methionine biosynthesis via salvage pathway; L-methionine from S-methyl-5-thio-alpha-D-ribose 1-phosphate: step 4/6. In terms of biological role, bifunctional enzyme that catalyzes the enolization of 2,3-diketo-5-methylthiopentyl-1-phosphate (DK-MTP-1-P) into the intermediate 2-hydroxy-3-keto-5-methylthiopentenyl-1-phosphate (HK-MTPenyl-1-P), which is then dephosphorylated to form the acireductone 1,2-dihydroxy-3-keto-5-methylthiopentene (DHK-MTPene). The sequence is that of Enolase-phosphatase E1 from Meyerozyma guilliermondii (strain ATCC 6260 / CBS 566 / DSM 6381 / JCM 1539 / NBRC 10279 / NRRL Y-324) (Yeast).